Consider the following 287-residue polypeptide: 4,4'-diapophytoene synthase (287 aa).

(2E,6E)-farnesyl diphosphate-binding positions include 18–21 (HSKS), tyrosine 41, and arginine 45. Mg(2+)-binding residues include aspartate 48 and aspartate 52. Glutamine 165 provides a ligand contact to (2E,6E)-farnesyl diphosphate. Asparagine 168 is a binding site for Mg(2+). Arginine 171 serves as a coordination point for (2E,6E)-farnesyl diphosphate. Aspartate 172 is a Mg(2+) binding site. A (2E,6E)-farnesyl diphosphate-binding site is contributed by tyrosine 248.

The protein belongs to the phytoene/squalene synthase family. CrtM subfamily. Mg(2+) is required as a cofactor.

It carries out the reaction 2 (2E,6E)-farnesyl diphosphate = 15-cis-4,4'-diapophytoene + 2 diphosphate. Its pathway is carotenoid biosynthesis; staphyloxanthin biosynthesis; staphyloxanthin from farnesyl diphosphate: step 1/5. Its function is as follows. Involved in the biosynthesis of the yellow-orange carotenoid staphyloxanthin, which plays a role in the virulence via its protective function against oxidative stress. Catalyzes the head-to-head condensation of two molecules of farnesyl diphosphate (FPP) into the colorless C(30) carotenoid 4,4'-diapophytoene (dehydrosqualene). The protein is 4,4'-diapophytoene synthase of Staphylococcus aureus (strain NCTC 8325 / PS 47).